Here is a 152-residue protein sequence, read N- to C-terminus: Transcriptional regulator MraZ (152 aa).

SpoVT-AbrB domains lie at 5 to 52 and 81 to 124; these read ATLV…PLPA and ASEC…DEQT.

Belongs to the MraZ family. As to quaternary structure, forms oligomers.

Its subcellular location is the cytoplasm. The protein localises to the nucleoid. Functionally, negatively regulates its own expression and that of the subsequent genes in the proximal part of the division and cell wall (dcw) gene cluster. Acts by binding directly to DNA. May also regulate the expression of genes outside the dcw cluster. This Sodalis glossinidius (strain morsitans) protein is Transcriptional regulator MraZ.